The chain runs to 448 residues: High mobility group B protein 15 (448 aa).

An ARID domain is found at 29 to 120 (VADPRLFMTS…LLNNYEQIYF (92 aa)). A compositionally biased stretch (polar residues) spans 219–236 (PQQSHGVLPNTLNISANP). Disordered stretches follow at residues 219 to 270 (PQQS…RSGY), 333 to 352 (KKNGQLISNAVPLQQRLPEQ), and 366 to 448 (VEED…AEQN). The span at 244-255 (TKRRRRRKKSEI) shows a compositional bias: basic residues. A DNA-binding region (HMG box) is located at residues 263-330 (PKPNRSGYNF…RYRTEMEDYR (68 aa)). Residues 389–398 (SIETDPELEE) show a composition bias toward acidic residues. The span at 399–412 (PSLNPSGPNLNPNP) shows a compositional bias: low complexity.

The protein belongs to the HMGB family.

It is found in the nucleus. Its function is as follows. Binds preferentially DNA with A/T-rich content. The sequence is that of High mobility group B protein 15 (HMGB15) from Arabidopsis thaliana (Mouse-ear cress).